A 124-amino-acid polypeptide reads, in one-letter code: MPTISQLIRRGRETVAQKSASPALRECPQKRGVCTRVYTTTPKKPNSALRKVARVRLTNGYEVTTYIPGIGHNLQEHSVVLVRGGRVKDLPGVRYHIVRGALDTAGVQNRNRGRSKYGAKRPKK.

Asp89 is subject to 3-methylthioaspartic acid. The interval 103–124 (DTAGVQNRNRGRSKYGAKRPKK) is disordered. A compositionally biased stretch (basic residues) spans 111-124 (NRGRSKYGAKRPKK).

The protein belongs to the universal ribosomal protein uS12 family. In terms of assembly, part of the 30S ribosomal subunit. Contacts proteins S8 and S17. May interact with IF1 in the 30S initiation complex.

With S4 and S5 plays an important role in translational accuracy. Functionally, interacts with and stabilizes bases of the 16S rRNA that are involved in tRNA selection in the A site and with the mRNA backbone. Located at the interface of the 30S and 50S subunits, it traverses the body of the 30S subunit contacting proteins on the other side and probably holding the rRNA structure together. The combined cluster of proteins S8, S12 and S17 appears to hold together the shoulder and platform of the 30S subunit. This Desulforudis audaxviator (strain MP104C) protein is Small ribosomal subunit protein uS12.